Here is a 368-residue protein sequence, read N- to C-terminus: tRNA-specific 2-thiouridylase MnmA (368 aa).

ATP-binding positions include Ala-6 to Ser-13 and Met-32. Cys-92 acts as the Nucleophile in catalysis. Cysteines 92 and 186 form a disulfide. Gly-116 lines the ATP pocket. The interaction with tRNA stretch occupies residues Lys-134–Gln-136. Cys-186 acts as the Cysteine persulfide intermediate in catalysis. The interval Arg-292 to Tyr-293 is interaction with tRNA.

It belongs to the MnmA/TRMU family.

The protein localises to the cytoplasm. The catalysed reaction is S-sulfanyl-L-cysteinyl-[protein] + uridine(34) in tRNA + AH2 + ATP = 2-thiouridine(34) in tRNA + L-cysteinyl-[protein] + A + AMP + diphosphate + H(+). Its function is as follows. Catalyzes the 2-thiolation of uridine at the wobble position (U34) of tRNA, leading to the formation of s(2)U34. The chain is tRNA-specific 2-thiouridylase MnmA from Campylobacter hominis (strain ATCC BAA-381 / DSM 21671 / CCUG 45161 / LMG 19568 / NCTC 13146 / CH001A).